The sequence spans 391 residues: Acetyl-CoA acetyltransferase (391 aa).

The active-site Acyl-thioester intermediate is the cysteine 88. Residues histidine 347 and cysteine 377 each act as proton acceptor in the active site.

This sequence belongs to the thiolase-like superfamily. Thiolase family. In terms of assembly, homotetramer.

The protein resides in the cytoplasm. The enzyme catalyses 2 acetyl-CoA = acetoacetyl-CoA + CoA. The protein operates within metabolic intermediate biosynthesis; (R)-mevalonate biosynthesis; (R)-mevalonate from acetyl-CoA: step 1/3. The sequence is that of Acetyl-CoA acetyltransferase (phaA) from Paracoccus denitrificans.